The chain runs to 306 residues: Non-specific ribonucleoside hydrolase RihC (306 aa).

His-235 is a catalytic residue.

The protein belongs to the IUNH family. RihC subfamily.

In terms of biological role, hydrolyzes both purine and pyrimidine ribonucleosides with a broad-substrate specificity. This is Non-specific ribonucleoside hydrolase RihC from Salmonella agona (strain SL483).